Here is a 601-residue protein sequence, read N- to C-terminus: Elongation factor 4 (601 aa).

One can recognise a tr-type G domain in the interval 7–189 (ELIRNFSIIA…ALVTRLPPPK (183 aa)). GTP-binding positions include 19 to 24 (DHGKST) and 136 to 139 (NKID).

This sequence belongs to the TRAFAC class translation factor GTPase superfamily. Classic translation factor GTPase family. LepA subfamily.

It is found in the cell inner membrane. It carries out the reaction GTP + H2O = GDP + phosphate + H(+). In terms of biological role, required for accurate and efficient protein synthesis under certain stress conditions. May act as a fidelity factor of the translation reaction, by catalyzing a one-codon backward translocation of tRNAs on improperly translocated ribosomes. Back-translocation proceeds from a post-translocation (POST) complex to a pre-translocation (PRE) complex, thus giving elongation factor G a second chance to translocate the tRNAs correctly. Binds to ribosomes in a GTP-dependent manner. The chain is Elongation factor 4 from Acidiphilium cryptum (strain JF-5).